Consider the following 671-residue polypeptide: DNA ligase (671 aa).

NAD(+) contacts are provided by residues 32-36 (DAEYD), 81-82 (SL), and E113. The active-site N6-AMP-lysine intermediate is the K115. NAD(+)-binding residues include R136, E173, K290, and K314. Positions 408, 411, 426, and 432 each coordinate Zn(2+). Positions 593-671 (EIDSPFAGKT…ETEMLRLLGS (79 aa)) constitute a BRCT domain.

The protein belongs to the NAD-dependent DNA ligase family. LigA subfamily. Mg(2+) is required as a cofactor. Requires Mn(2+) as cofactor.

It carries out the reaction NAD(+) + (deoxyribonucleotide)n-3'-hydroxyl + 5'-phospho-(deoxyribonucleotide)m = (deoxyribonucleotide)n+m + AMP + beta-nicotinamide D-nucleotide.. DNA ligase that catalyzes the formation of phosphodiester linkages between 5'-phosphoryl and 3'-hydroxyl groups in double-stranded DNA using NAD as a coenzyme and as the energy source for the reaction. It is essential for DNA replication and repair of damaged DNA. This chain is DNA ligase, found in Escherichia coli O6:H1 (strain CFT073 / ATCC 700928 / UPEC).